The chain runs to 338 residues: dTDP-glucose 4,6-dehydratase (338 aa).

Residues 12–13 (FI), 33–36 (DKLT), 59–60 (DI), 81–85 (LAAES), and T100 each bind NAD(+). Position 85 (S85) interacts with substrate. T134 provides a ligand contact to substrate. The Proton donor role is filled by D135. Residues E136 and Y160 each act as proton acceptor in the active site. 160–164 (YSASK) is an NAD(+) binding site. N189 lines the substrate pocket. An NAD(+)-binding site is contributed by N190. Substrate is bound by residues 199–200 (KL), 215–217 (PIY), R224, N259, and 293–297 (DRPGH).

It belongs to the NAD(P)-dependent epimerase/dehydratase family. dTDP-glucose dehydratase subfamily. As to quaternary structure, homodimer. NAD(+) is required as a cofactor.

The catalysed reaction is dTDP-alpha-D-glucose = dTDP-4-dehydro-6-deoxy-alpha-D-glucose + H2O. The protein operates within carbohydrate biosynthesis; dTDP-L-rhamnose biosynthesis. Its pathway is bacterial outer membrane biogenesis; LPS O-antigen biosynthesis. Its function is as follows. Catalyzes the dehydration of dTDP-D-glucose to form dTDP-6-deoxy-D-xylo-4-hexulose via a three-step process involving oxidation, dehydration and reduction. This Haemophilus influenzae (strain ATCC 51907 / DSM 11121 / KW20 / Rd) protein is dTDP-glucose 4,6-dehydratase (rffG).